The following is a 111-amino-acid chain: Entry-fusion complex protein OPG086 (111 aa).

The chain crosses the membrane as a helical; Signal-anchor span at residues 1–21 (MASLLYLILFLLFVCISYYFT). The Virion surface portion of the chain corresponds to 22–111 (YYPTNKLQAA…TLLPILLLSK (90 aa)).

This sequence belongs to the orthopoxvirus OPG086 family. Interacts with OPG099/L5. Component of the entry fusion complex (EFC) composed of OPG053, OPG076, OPG086, OPG094, OPG095, OPG099, OPG107, OPG143, OPG104, OPG147 and OPG155. Except for OPG095 and OPG053, each of the EFC proteins is required for assembly or stability of the complex. Unglycosylated because produced in viral factories instead of the classic ER -Golgi route.

The protein localises to the virion membrane. In terms of biological role, component of the entry fusion complex (EFC), which consists of 11 proteins. During cell infection, this complex mediates entry of the virion core into the host cytoplasm by a two-step mechanism consisting of lipid mixing of the viral and cellular membranes and subsequent pore formation. The protein is Entry-fusion complex protein OPG086 (OPG086) of Vaccinia virus (strain Copenhagen) (VACV).